We begin with the raw amino-acid sequence, 176 residues long: Crossover junction endodeoxyribonuclease RuvC (176 aa).

Residues D8, E69, and D141 contribute to the active site. Mg(2+) contacts are provided by D8, E69, and D141.

This sequence belongs to the RuvC family. In terms of assembly, homodimer which binds Holliday junction (HJ) DNA. The HJ becomes 2-fold symmetrical on binding to RuvC with unstacked arms; it has a different conformation from HJ DNA in complex with RuvA. In the full resolvosome a probable DNA-RuvA(4)-RuvB(12)-RuvC(2) complex forms which resolves the HJ. It depends on Mg(2+) as a cofactor.

The protein resides in the cytoplasm. The enzyme catalyses Endonucleolytic cleavage at a junction such as a reciprocal single-stranded crossover between two homologous DNA duplexes (Holliday junction).. Its function is as follows. The RuvA-RuvB-RuvC complex processes Holliday junction (HJ) DNA during genetic recombination and DNA repair. Endonuclease that resolves HJ intermediates. Cleaves cruciform DNA by making single-stranded nicks across the HJ at symmetrical positions within the homologous arms, yielding a 5'-phosphate and a 3'-hydroxyl group; requires a central core of homology in the junction. The consensus cleavage sequence is 5'-(A/T)TT(C/G)-3'. Cleavage occurs on the 3'-side of the TT dinucleotide at the point of strand exchange. HJ branch migration catalyzed by RuvA-RuvB allows RuvC to scan DNA until it finds its consensus sequence, where it cleaves and resolves the cruciform DNA. This chain is Crossover junction endodeoxyribonuclease RuvC, found in Pseudomonas syringae pv. tomato (strain ATCC BAA-871 / DC3000).